The chain runs to 112 residues: Toxin-like structure LSTX-D10 (112 aa).

Positions 1 to 20 are cleaved as a signal peptide; sequence MMKVLVVVALLVTLISYSSS. A propeptide spanning residues 21-41 is cleaved from the precursor; the sequence is EGIDDLEADELLSLMANEQTR. Intrachain disulfides connect Cys-45–Cys-60, Cys-52–Cys-69, Cys-59–Cys-84, and Cys-71–Cys-82.

This sequence belongs to the neurotoxin 19 (CSTX) family. 01 subfamily. As to expression, expressed by the venom gland.

It is found in the secreted. This Lycosa singoriensis (Wolf spider) protein is Toxin-like structure LSTX-D10.